The primary structure comprises 185 residues: Inner membrane-spanning protein YciB (185 aa).

Helical transmembrane passes span 19–39, 49–69, 72–92, 122–142, and 150–170; these read IHGIYTATEVLIVAAILLMAW, TMTWVSTLLILTFGGLTLYFH, TFIKIKPSILYVLFAAALLFT, GYWIAFFLFGAVLNLIVAYAF, and FKLFGMLAITVIFVLFQAVVI.

The protein belongs to the YciB family.

The protein resides in the cell inner membrane. Functionally, plays a role in cell envelope biogenesis, maintenance of cell envelope integrity and membrane homeostasis. The protein is Inner membrane-spanning protein YciB of Acidithiobacillus ferrooxidans (strain ATCC 23270 / DSM 14882 / CIP 104768 / NCIMB 8455) (Ferrobacillus ferrooxidans (strain ATCC 23270)).